The sequence spans 90 residues: Probable small nuclear ribonucleoprotein E (90 aa).

The 76-residue stretch at Val14–Glu89 folds into the Sm domain.

The protein belongs to the snRNP Sm proteins family. As to quaternary structure, core component of the spliceosomal U1, U2, U4 and U5 small nuclear ribonucleoproteins (snRNPs), the building blocks of the spliceosome.

It is found in the nucleus. It localises to the cytoplasm. Its subcellular location is the cytosol. Its function is as follows. Plays a role in pre-mRNA splicing as a core component of the spliceosomal U1, U2, U4 and U5 small nuclear ribonucleoproteins (snRNPs), the building blocks of the spliceosome. This Caenorhabditis briggsae protein is Probable small nuclear ribonucleoprotein E (snr-6).